The sequence spans 250 residues: MPLTLKQEDQVNVSLQSLPRHVAIIMDGNRRWHQQHQTQCTLKQTSGHYYGAKALPSIIESAFSLGIEVLTLFAFSTENFLRSTEEVEELFSLFHSQLDEQFPYLIENKIRLRCIGNLSALPLQLQQKISEISLKTHQNSHRDLVLAINYGGKDELVRAFKKLHQDLVEQKISSDSISEELIRLYLDTSEMPDPDLLIRTGGEMRVSNFLLWQIAYTELYVTDILWPDFKPNHFLDAIKAYQHRSRRGGR.

The active site involves D27. Mg(2+) is bound at residue D27. Residues 28-31 (GNRR), W32, H48, and 76-78 (STE) each bind substrate. N79 functions as the Proton acceptor in the catalytic mechanism. Substrate-binding positions include F80, R82, R199, and 205-207 (RVS). E218 serves as a coordination point for Mg(2+).

It belongs to the UPP synthase family. In terms of assembly, homodimer. Mg(2+) is required as a cofactor.

Its function is as follows. Catalyzes the condensation of isopentenyl diphosphate (IPP) with allylic pyrophosphates generating different type of terpenoids. The sequence is that of Isoprenyl transferase from Chlamydia caviae (strain ATCC VR-813 / DSM 19441 / 03DC25 / GPIC) (Chlamydophila caviae).